A 397-amino-acid polypeptide reads, in one-letter code: Aspartate/prephenate aminotransferase (397 aa).

3 residues coordinate L-aspartate: Gly-38, Trp-124, and Asn-174. Lys-238 carries the post-translational modification N6-(pyridoxal phosphate)lysine. An L-aspartate-binding site is contributed by Arg-375.

This sequence belongs to the class-I pyridoxal-phosphate-dependent aminotransferase family. Homodimer. It depends on pyridoxal 5'-phosphate as a cofactor.

The protein resides in the cytoplasm. It catalyses the reaction L-aspartate + 2-oxoglutarate = oxaloacetate + L-glutamate. The catalysed reaction is L-arogenate + 2-oxoglutarate = prephenate + L-glutamate. In terms of biological role, catalyzes the reversible conversion of aspartate and 2-oxoglutarate to glutamate and oxaloacetate. Can also transaminate prephenate in the presence of glutamate, with lower efficiency. In Nitrosomonas europaea (strain ATCC 19718 / CIP 103999 / KCTC 2705 / NBRC 14298), this protein is Aspartate/prephenate aminotransferase.